Consider the following 875-residue polypeptide: Alanine--tRNA ligase (875 aa).

Zn(2+)-binding residues include H563, H567, C665, and H669.

Belongs to the class-II aminoacyl-tRNA synthetase family. Zn(2+) serves as cofactor.

Its subcellular location is the cytoplasm. The enzyme catalyses tRNA(Ala) + L-alanine + ATP = L-alanyl-tRNA(Ala) + AMP + diphosphate. In terms of biological role, catalyzes the attachment of alanine to tRNA(Ala) in a two-step reaction: alanine is first activated by ATP to form Ala-AMP and then transferred to the acceptor end of tRNA(Ala). Also edits incorrectly charged Ser-tRNA(Ala) and Gly-tRNA(Ala) via its editing domain. This Desulfitobacterium hafniense (strain Y51) protein is Alanine--tRNA ligase.